Reading from the N-terminus, the 302-residue chain is Acetyl-coenzyme A carboxylase carboxyl transferase subunit beta (302 aa).

One can recognise a CoA carboxyltransferase N-terminal domain in the interval 25–294 (VWTKCDSCGQ…PQEDIVTEAA (270 aa)). Zn(2+)-binding residues include cysteine 29, cysteine 32, cysteine 48, and cysteine 51. The segment at 29–51 (CDSCGQVLYRAELERNLEVCPKC) adopts a C4-type zinc-finger fold.

It belongs to the AccD/PCCB family. In terms of assembly, acetyl-CoA carboxylase is a heterohexamer composed of biotin carboxyl carrier protein (AccB), biotin carboxylase (AccC) and two subunits each of ACCase subunit alpha (AccA) and ACCase subunit beta (AccD). The cofactor is Zn(2+).

It localises to the cytoplasm. The enzyme catalyses N(6)-carboxybiotinyl-L-lysyl-[protein] + acetyl-CoA = N(6)-biotinyl-L-lysyl-[protein] + malonyl-CoA. The protein operates within lipid metabolism; malonyl-CoA biosynthesis; malonyl-CoA from acetyl-CoA: step 1/1. Component of the acetyl coenzyme A carboxylase (ACC) complex. Biotin carboxylase (BC) catalyzes the carboxylation of biotin on its carrier protein (BCCP) and then the CO(2) group is transferred by the transcarboxylase to acetyl-CoA to form malonyl-CoA. This is Acetyl-coenzyme A carboxylase carboxyl transferase subunit beta from Erwinia tasmaniensis (strain DSM 17950 / CFBP 7177 / CIP 109463 / NCPPB 4357 / Et1/99).